The following is a 279-amino-acid chain: Vitamin B12-binding protein (279 aa).

An N-terminal signal peptide occupies residues 1 to 20 (MTFRFLCWLTGLLLCTAAYA). In terms of domain architecture, Fe/B12 periplasmic-binding spans 24-276 (RVISLAPHAT…QLAELKLAPS (253 aa)). Residues Cys189 and Cys265 are joined by a disulfide bond.

This sequence belongs to the BtuF family. The complex is composed of two ATP-binding proteins (BtuD), two transmembrane proteins (BtuC) and a solute-binding protein (BtuF).

It localises to the periplasm. Part of the ABC transporter complex BtuCDF involved in vitamin B12 import. Binds vitamin B12 and delivers it to the periplasmic surface of BtuC. The protein is Vitamin B12-binding protein of Pectobacterium atrosepticum (strain SCRI 1043 / ATCC BAA-672) (Erwinia carotovora subsp. atroseptica).